Here is a 63-residue protein sequence, read N- to C-terminus: Small ribosomal subunit protein bS21 (63 aa).

The protein belongs to the bacterial ribosomal protein bS21 family.

This chain is Small ribosomal subunit protein bS21, found in Syntrophus aciditrophicus (strain SB).